The chain runs to 360 residues: 3-isopropylmalate dehydrogenase (360 aa).

NAD(+) is bound at residue 76–89 (GPKWDTIERDIRPE). 4 residues coordinate substrate: Arg96, Arg106, Arg134, and Asp224. Residues Asp224, Asp248, and Asp252 each contribute to the Mg(2+) site. 282–294 (GSAPDIAGKGIAN) contacts NAD(+).

The protein belongs to the isocitrate and isopropylmalate dehydrogenases family. LeuB type 1 subfamily. Homodimer. The cofactor is Mg(2+). Mn(2+) is required as a cofactor.

It localises to the cytoplasm. The enzyme catalyses (2R,3S)-3-isopropylmalate + NAD(+) = 4-methyl-2-oxopentanoate + CO2 + NADH. It participates in amino-acid biosynthesis; L-leucine biosynthesis; L-leucine from 3-methyl-2-oxobutanoate: step 3/4. Functionally, catalyzes the oxidation of 3-carboxy-2-hydroxy-4-methylpentanoate (3-isopropylmalate) to 3-carboxy-4-methyl-2-oxopentanoate. The product decarboxylates to 4-methyl-2 oxopentanoate. The polypeptide is 3-isopropylmalate dehydrogenase (Pseudomonas syringae pv. syringae (strain B728a)).